The following is a 133-amino-acid chain: MAEWHKIIEDISKNNNFEDAAIVDYKTTKNVLAAIPNRTFAKINPGEVIPLITNHNILKPLIGQKFCIVYTNSLMDENTYAMELLTGYAPVSPIVIARTHTALIFLMGKPTTSRRDVYRTCRDHATRVRATGN.

This sequence belongs to the profilin family. Interacts with host TPM1. Interacts with protein A25.

The protein localises to the host cytoplasm. Functionally, participates in either intracellular transport of viral proteins or intercellular spread of the virus. Cellular profilins modulate actin filament dynamics (polymerization and depolymerization) via direct binding to actin through an actin-binding domain as well as by modulation of other actin-binding proteins. In contrast to cellular homologs, the poxvirus profilins seem to bind actin only weakly. In Variola virus (isolate Human/India/Ind3/1967) (VARV), this protein is Profilin (OPG171).